The following is a 650-amino-acid chain: Protein ANTI-SILENCING 1 (650 aa).

Positions 38–169 (DEYRLYDCVL…VGSCKVVDTI (132 aa)) constitute a BAH domain. Disordered stretches follow at residues 202-223 (NGKSDSLKPNGPLARGASGSVR), 229-248 (AFESSDCKENSNGCKEEKEK), 257-359 (KSTL…QKLD), and 425-448 (VTEKGISKKPSFGRAEDKMSADDN). Composition is skewed to basic and acidic residues over residues 259–270 (TLAEERSNKDSG) and 277–287 (NGKDQESEVKK). Over residues 302–315 (SNSFEASGSRTIHS) the composition is skewed to polar residues. Basic and acidic residues-rich tracts occupy residues 348–358 (LDDRPLKKQKL) and 438–448 (RAEDKMSADDN). The RRM domain maps to 486–569 (TVVLLQNLDP…RPLVASFAKI (84 aa)).

In terms of assembly, component of the ASI1-AIPP1-EDM2 (AAE) RNA regulatory complex composed of at least AIPP1/EDM3, ASI1 and EDM2 and may contain CPL2, AIPP2 and AIPP3/BDT1. Binds directly to AIPP1/EDM3 and AIPP2.

Collaboratively with AIPP1/EDM3 and EDM2, the AAE complex regulates alternative RNA processing (e.g. alternative splicing) and epigenetic silencing (e.g. H3K9me2) of intronic heterochromatin-containing genes as well as genic heterochromatin-containing genes by promoting distal 3' polyadenylation; may associate with intronic heterochromatin and bind gene transcripts to modulate polyadenylation. Required to prevent promoter DNA hypermethylation and transcriptional silencing of some transgenes. Plays a similar role to that of the histone H3K9 demethylase JMJ25/IBM1 in preventing CHG methylation in the bodies of numerous genes. RNA-binding protein that ensures the proper expression of JMJ25/IBM1 full-length transcript by associating with an intronic heterochromatic repeat element of JMJ25/IBM1. Also modulates transposable elements (TE) expression. Contributes to a unique mechanism to deal with the collateral effect of silencing intronic repeat elements. In Arabidopsis thaliana (Mouse-ear cress), this protein is Protein ANTI-SILENCING 1.